The following is a 1391-amino-acid chain: DNA-directed RNA polymerase subunit beta (1391 aa).

It belongs to the RNA polymerase beta chain family. In terms of assembly, the RNAP catalytic core consists of 2 alpha, 1 beta, 1 beta' and 1 omega subunit. When a sigma factor is associated with the core the holoenzyme is formed, which can initiate transcription.

The catalysed reaction is RNA(n) + a ribonucleoside 5'-triphosphate = RNA(n+1) + diphosphate. DNA-dependent RNA polymerase catalyzes the transcription of DNA into RNA using the four ribonucleoside triphosphates as substrates. The polypeptide is DNA-directed RNA polymerase subunit beta (Granulibacter bethesdensis (strain ATCC BAA-1260 / CGDNIH1)).